The sequence spans 124 residues: Small ribosomal subunit protein eS6 (124 aa).

This sequence belongs to the eukaryotic ribosomal protein eS6 family.

This Thermoplasma acidophilum (strain ATCC 25905 / DSM 1728 / JCM 9062 / NBRC 15155 / AMRC-C165) protein is Small ribosomal subunit protein eS6.